Consider the following 316-residue polypeptide: Solute carrier family 25 member 32 (316 aa).

Solcar repeat units lie at residues 20 to 109 (HVRY…IKSY), 118 to 209 (LEPL…LKLK), and 222 to 306 (LSTA…VSHF). The next 6 membrane-spanning stretches (helical) occupy residues 26–46 (LVAGVSGGVLSNLALHPLDLV), 89–106 (VWGAGLSWGLYFFFYNAI), 123–143 (YLVSAAEAGAMTLCITNPLWV), 185–203 (GFVPGLFGTSHGALQFMAY), 227–243 (YISVAALSKIFAVAATY), and 281–300 (GIAPNLIRVTPACCITFVVY).

This sequence belongs to the mitochondrial carrier (TC 2.A.29) family.

The protein localises to the mitochondrion inner membrane. It carries out the reaction FAD(in) = FAD(out). Its function is as follows. Facilitates flavin adenine dinucleotide (FAD) translocation across the mitochondrial inner membrane into the mitochondrial matrix where it acts as a redox cofactor to assist flavoenzyme activities in fundamental metabolic processes including fatty acid beta-oxidation, amino acid and choline metabolism as well as mitochondrial electron transportation. In particular, provides FAD to DLD dehydrogenase of the glycine cleavage system, part of mitochondrial one-carbon metabolic pathway involved in neural tube closure in early embryogenesis. This Mus musculus (Mouse) protein is Solute carrier family 25 member 32.